A 186-amino-acid polypeptide reads, in one-letter code: Peptidyl-tRNA hydrolase (186 aa).

Tyr14 is a tRNA binding site. His19 acts as the Proton acceptor in catalysis. Tyr64, Asn66, and Asn112 together coordinate tRNA.

It belongs to the PTH family. As to quaternary structure, monomer.

The protein resides in the cytoplasm. It carries out the reaction an N-acyl-L-alpha-aminoacyl-tRNA + H2O = an N-acyl-L-amino acid + a tRNA + H(+). Hydrolyzes ribosome-free peptidyl-tRNAs (with 1 or more amino acids incorporated), which drop off the ribosome during protein synthesis, or as a result of ribosome stalling. Functionally, catalyzes the release of premature peptidyl moieties from peptidyl-tRNA molecules trapped in stalled 50S ribosomal subunits, and thus maintains levels of free tRNAs and 50S ribosomes. This is Peptidyl-tRNA hydrolase from Bacillus cereus (strain ATCC 14579 / DSM 31 / CCUG 7414 / JCM 2152 / NBRC 15305 / NCIMB 9373 / NCTC 2599 / NRRL B-3711).